The primary structure comprises 353 residues: Photosystem II protein D1 (353 aa).

Position 2 is an N-acetylthreonine (T2). At T2 the chain carries Phosphothreonine. Helical transmembrane passes span 29 to 46 (YIGWFGVLMIPTLLTATS), 118 to 133 (HFLLGVACYMGREWEL), and 142 to 156 (WIAVAYSAPVAAATA). H118 serves as a coordination point for chlorophyll a. Residue Y126 participates in pheophytin a binding. [CaMn4O5] cluster is bound by residues D170 and E189. Residues 197 to 218 (FHMLGVAGVFGGSLFSAMHGSL) traverse the membrane as a helical segment. Residue H198 participates in chlorophyll a binding. A quinone-binding positions include H215 and 264 to 265 (SF). Fe cation is bound at residue H215. Residue H272 coordinates Fe cation. The chain crosses the membrane as a helical span at residues 274–288 (FLAAWPVVGIWFTAL). [CaMn4O5] cluster is bound by residues H332, E333, D342, and A344. The propeptide occupies 345–353 (AVEAPSING).

It belongs to the reaction center PufL/M/PsbA/D family. In terms of assembly, PSII is composed of 1 copy each of membrane proteins PsbA, PsbB, PsbC, PsbD, PsbE, PsbF, PsbH, PsbI, PsbJ, PsbK, PsbL, PsbM, PsbT, PsbX, PsbY, PsbZ, Psb30/Ycf12, at least 3 peripheral proteins of the oxygen-evolving complex and a large number of cofactors. It forms dimeric complexes. Requires The D1/D2 heterodimer binds P680, chlorophylls that are the primary electron donor of PSII, and subsequent electron acceptors. It shares a non-heme iron and each subunit binds pheophytin, quinone, additional chlorophylls, carotenoids and lipids. D1 provides most of the ligands for the Mn4-Ca-O5 cluster of the oxygen-evolving complex (OEC). There is also a Cl(-1) ion associated with D1 and D2, which is required for oxygen evolution. The PSII complex binds additional chlorophylls, carotenoids and specific lipids. as cofactor. Post-translationally, tyr-161 forms a radical intermediate that is referred to as redox-active TyrZ, YZ or Y-Z. C-terminally processed by CTPA; processing is essential to allow assembly of the oxygen-evolving complex and thus photosynthetic growth.

Its subcellular location is the plastid. The protein localises to the chloroplast thylakoid membrane. The catalysed reaction is 2 a plastoquinone + 4 hnu + 2 H2O = 2 a plastoquinol + O2. In terms of biological role, photosystem II (PSII) is a light-driven water:plastoquinone oxidoreductase that uses light energy to abstract electrons from H(2)O, generating O(2) and a proton gradient subsequently used for ATP formation. It consists of a core antenna complex that captures photons, and an electron transfer chain that converts photonic excitation into a charge separation. The D1/D2 (PsbA/PsbD) reaction center heterodimer binds P680, the primary electron donor of PSII as well as several subsequent electron acceptors. The polypeptide is Photosystem II protein D1 (Chloranthus spicatus (Chulantree)).